Reading from the N-terminus, the 276-residue chain is uncharacterized protein (276 aa).

Residues 1-19 (MKKWLICSFVLVLLVSFTA) form the signal peptide. Residue C20 is the site of N-palmitoyl cysteine attachment. A lipid anchor (S-diacylglycerol cysteine) is attached at C20.

This sequence belongs to the NlpA lipoprotein family.

It localises to the cell membrane. This is an uncharacterized protein from Bacillus subtilis (strain 168).